A 613-amino-acid polypeptide reads, in one-letter code: MLEKEGKLIMSREDEEIMAWFERTTRDAADVQRETLRRILAENAGVEYLRELGLAGLTDAGSFRARVPVVTHADLDPYIQRVADGDASPVLTAKPVTAISLSSGTTQGKRKRLLFNDDLLRSSIRFFHASYAFTNRAFPVEDGRVLQFMYGSRHETTKGGLTATTVMTNLLRSEEFTASMAARSRPRLPSCSPSEVVFSPDFDESLYCHLLCGLLLAGEVRAVSASFAHSIVVALQALERVWRELCADIRRGAASPARVTTPAVRRAVAPILAAPNPALADALERRCAALGDWSGVIPALWPNARYVQATMTGSMEHYVKKLRHYAGGVPLVSGNYASSEGVIGINAEQHAPPESVVFTVLPDAAYFEFIPLKPPCTDAAADDDNPAAAGSSCYVDADDANPVGLTDVVVGEHYEVVMTTFTGLYRYRLGDVVKVAGFHHATPKLRFVCRRSLILSINVDKNSEHDLQLAVDSAAKILAGDGENHKQLEIADYTSHADTSSDPGHYVVFWELNGGGEEDGGGVLQRCCDEMDRAFGADAGYAQSRKTCAIGALELRVLRRGAFQEVLRHYVAGGSSAGQFKMPRCVAPSNAGVLRVLKDNTINIFFSTAYDYD.

It belongs to the IAA-amido conjugating enzyme family. In terms of tissue distribution, expressed in roots.

Its function is as follows. May catalyze the synthesis of indole-3-acetic acid (IAA)-amino acid conjugates, providing a mechanism for the plant to cope with the presence of excess auxin. The sequence is that of Probable indole-3-acetic acid-amido synthetase GH3.12 (GH3.12) from Oryza sativa subsp. japonica (Rice).